Here is a 141-residue protein sequence, read N- to C-terminus: Large ribosomal subunit protein uL16c (141 aa).

The segment covering 1-17 (MLSPRRTKYRKQHRGRL) has biased composition (basic residues). Positions 1-20 (MLSPRRTKYRKQHRGRLKGT) are disordered.

This sequence belongs to the universal ribosomal protein uL16 family. In terms of assembly, part of the 50S ribosomal subunit.

The protein localises to the plastid. The protein resides in the chloroplast. In Staurastrum punctulatum (Green alga), this protein is Large ribosomal subunit protein uL16c.